The following is a 448-amino-acid chain: Noelin-2 (448 aa).

Positions 1–14 are cleaved as a signal peptide; the sequence is MRKLRQTGTTIAGG. Coiled-coil stretches lie at residues 52–79 and 130–187; these read RDGR…LELR and LEQY…AQKL. Residues N68, N149, N269, N304, N393, and N435 are each glycosylated (N-linked (GlcNAc...) asparagine). The Olfactomedin-like domain maps to 188 to 440; the sequence is GCGKLTGVSN…QVLYNVTLFH (253 aa). A disulfide bridge connects residues C189 and C371.

In terms of assembly, peripherally associated with AMPAR complex. AMPAR complex consists of an inner core made of 4 pore-forming GluA/GRIA proteins (GRIA1, GRIA2, GRIA3 and GRIA4) and 4 major auxiliary subunits arranged in a twofold symmetry. One of the two pairs of distinct binding sites is occupied either by CNIH2, CNIH3 or CACNG2, CACNG3. The other harbors CACNG2, CACNG3, CACNG4, CACNG8 or GSG1L. This inner core of AMPAR complex is complemented by outer core constituents binding directly to the GluA/GRIA proteins at sites distinct from the interaction sites of the inner core constituents. Outer core constituents include at least PRRT1, PRRT2, CKAMP44/SHISA9, FRRS1L and NRN1. The proteins of the inner and outer core serve as a platform for other, more peripherally associated AMPAR constituents, including OLFM2. Alone or in combination, these auxiliary subunits control the gating and pharmacology of the AMPAR complex and profoundly impact their biogenesis and protein processing. Interacts with GRIA2. Interacts with OLFM1 and OLFM3. Interacts with SRF; the interaction promotes dissociation of SRF from the transcriptional repressor HEY2. Interacts with RUNX2. As to expression, expressed in the brain (at protein level). In the developing eye, first detected at 12 dpc in the retinal pigmented epithelium and preferentially expressed in differentiating retinal ganglion cells between 15 and 18 dpc. In the brain, expression is detected mainly in the olfactory bulb, cortex, piriform cortex, olfactory trabeculae, and inferior and superior colliculus. In the adult eye, expression is detected mainly in retinal ganglion cells. Expressed in carotid arteries.

It is found in the secreted. The protein localises to the synapse. It localises to the membrane. Its subcellular location is the nucleus. The protein resides in the cytoplasm. Functionally, involved in transforming growth factor beta (TGF-beta)-induced smooth muscle differentiation. TGF-beta induces expression and nuclear translocation of OLFM2 where it binds to SRF, causing its dissociation from the transcriptional repressor HEY2/HERP1 and facilitating binding of SRF to target genes. Plays a role in AMPAR complex organization. Is a regulator of vascular smooth-muscle cell (SMC) phenotypic switching, that acts by promoting RUNX2 and inhibiting MYOCD binding to SRF. SMC phenotypic switching is the process through which vascular SMCs undergo transition between a quiescent contractile phenotype and a proliferative synthetic phenotype in response to pathological stimuli. SMC phenotypic plasticity is essential for vascular development and remodeling. This Mus musculus (Mouse) protein is Noelin-2 (Olfm2).